The chain runs to 335 residues: Eukaryotic translation initiation factor 3 subunit I (335 aa).

5 WD repeats span residues 8–47 (GHER…RLGT), 50–91 (GHQG…KTWD), 145–184 (CAES…LLFN), 189–228 (EPDL…VMKT), and 286–325 (GHFG…FDFT).

The protein belongs to the eIF-3 subunit I family. In terms of assembly, component of the eukaryotic translation initiation factor 3 (eIF-3) complex.

The protein localises to the cytoplasm. In terms of biological role, component of the eukaryotic translation initiation factor 3 (eIF-3) complex, which is involved in protein synthesis of a specialized repertoire of mRNAs and, together with other initiation factors, stimulates binding of mRNA and methionyl-tRNAi to the 40S ribosome. The eIF-3 complex specifically targets and initiates translation of a subset of mRNAs involved in cell proliferation. The chain is Eukaryotic translation initiation factor 3 subunit I (tif34) from Botryotinia fuckeliana (strain B05.10) (Noble rot fungus).